The primary structure comprises 248 residues: Ureidoacrylate amidohydrolase RutB (248 aa).

The Proton acceptor role is filled by Asp-41. Residue Lys-150 is part of the active site. Cys-183 serves as the catalytic Nucleophile.

It belongs to the isochorismatase family. RutB subfamily.

The catalysed reaction is (Z)-3-ureidoacrylate + H2O + H(+) = (Z)-3-aminoacrylate + NH4(+) + CO2. It catalyses the reaction (Z)-3-ureidoacrylate + H2O = (Z)-3-aminoacrylate + carbamate + H(+). It carries out the reaction (Z)-2-methylureidoacrylate + H2O + H(+) = (Z)-2-methylaminoacrylate + NH4(+) + CO2. Hydrolyzes ureidoacrylate to form aminoacrylate and carbamate. The carbamate hydrolyzes spontaneously, thereby releasing one of the nitrogen atoms of the pyrimidine ring as ammonia and one of its carbon atoms as CO2. This is Ureidoacrylate amidohydrolase RutB from Stutzerimonas stutzeri (strain A1501) (Pseudomonas stutzeri).